Reading from the N-terminus, the 536-residue chain is Methyl-accepting chemotaxis aspartate transducer (536 aa).

Residues 1–10 lie on the Cytoplasmic side of the membrane; the sequence is MFNRIRISTS. Residues 11–31 form a helical membrane-spanning segment; it reads LFLLLISFCIMQLISTGLSYV. At 32 to 188 the chain is on the periplasmic side; sequence ALRADNHNLE…ASSQQAYGWS (157 aa). The segment at 64 to 73 is the 3 Arg may form a positively charged pocket, which binds the alpha-carboxyl group of the attractant AA; it reads RNTLNRAGTR. The chain crosses the membrane as a helical span at residues 189-209; it reads IWLVAGAVLMLLVVTLSAMWW. Residues 210–536 are Cytoplasmic-facing; the sequence is LRTMLVQPLN…VKETLDCQTA (327 aa). Residues 212–264 form the HAMP domain; it reads TMLVQPLNIIRGHFERIASGDLSAPIEVYGRNEISQLFASLQRMQQSLIGTVG. The region spanning 269–498 is the Methyl-accepting transducer domain; sequence GAESILIGLQ…ESASAAAALE (230 aa). A Glutamate methyl ester (Gln) modification is found at glutamine 293. Glutamate 300 carries the glutamate methyl ester (Glu) modification. Glutamate methyl ester (Gln) is present on glutamine 307. A glutamate methyl ester (Glu) mark is found at glutamate 489 and glutamate 498.

This sequence belongs to the methyl-accepting chemotaxis (MCP) protein family.

Its subcellular location is the cell inner membrane. Functionally, this protein responds to changes in Asp concentration in the environment, transduces a signal from the outside to the inside of the cell, and facilitates sensory adaptation through various levels of methylation. In terms of biological role, chemotactic-signal transducers respond to changes in the concentration of attractants and repellents in the environment, transduce a signal from the outside to the inside of the cell, and facilitate sensory adaptation through the variation of the level of methylation. Attractants increase the level of methylation while repellents decrease the level of methylation, the methyl groups are added by the methyltransferase CheR and removed by the methylesterase CheB. The polypeptide is Methyl-accepting chemotaxis aspartate transducer (tas) (Klebsiella aerogenes (strain ATCC 13048 / DSM 30053 / CCUG 1429 / JCM 1235 / KCTC 2190 / NBRC 13534 / NCIMB 10102 / NCTC 10006 / CDC 819-56) (Enterobacter aerogenes)).